Here is an 80-residue protein sequence, read N- to C-terminus: Large ribosomal subunit protein bL31B (80 aa).

This sequence belongs to the bacterial ribosomal protein bL31 family. Type B subfamily. Part of the 50S ribosomal subunit.

The sequence is that of Large ribosomal subunit protein bL31B from Xylella fastidiosa (strain M23).